A 98-amino-acid chain; its full sequence is MLDRQQVQKIAHLARLDITSEEEEKFADQLSDILDYFEQLSELDTENVPPTTRAIELSNITRQDSFELYHDRDALLNEAPNPEGDFFRVPQILNTDEE.

Residues 77–98 are disordered; it reads NEAPNPEGDFFRVPQILNTDEE.

This sequence belongs to the GatC family. Heterotrimer of A, B and C subunits.

It catalyses the reaction L-glutamyl-tRNA(Gln) + L-glutamine + ATP + H2O = L-glutaminyl-tRNA(Gln) + L-glutamate + ADP + phosphate + H(+). The catalysed reaction is L-aspartyl-tRNA(Asn) + L-glutamine + ATP + H2O = L-asparaginyl-tRNA(Asn) + L-glutamate + ADP + phosphate + 2 H(+). Functionally, allows the formation of correctly charged Asn-tRNA(Asn) or Gln-tRNA(Gln) through the transamidation of misacylated Asp-tRNA(Asn) or Glu-tRNA(Gln) in organisms which lack either or both of asparaginyl-tRNA or glutaminyl-tRNA synthetases. The reaction takes place in the presence of glutamine and ATP through an activated phospho-Asp-tRNA(Asn) or phospho-Glu-tRNA(Gln). This chain is Aspartyl/glutamyl-tRNA(Asn/Gln) amidotransferase subunit C, found in Crocosphaera subtropica (strain ATCC 51142 / BH68) (Cyanothece sp. (strain ATCC 51142)).